A 1158-amino-acid polypeptide reads, in one-letter code: Phospholipid-transporting ATPase 1 (1158 aa).

Positions 1 to 15 are enriched in basic and acidic residues; the sequence is MDPRKSIDKPPHHDP. The segment at 1–30 is disordered; sequence MDPRKSIDKPPHHDPILGVSSRWSVSSKDN. The Cytoplasmic portion of the chain corresponds to 1-100; that stretch reads MDPRKSIDKP…TAKYSVFTFL (100 aa). The chain crosses the membrane as a helical span at residues 101–122; that stretch reads PRNLFEQFHRVAYIYFLVIAVL. Residues 123-127 lie on the Extracellular side of the membrane; that stretch reads NQLPQ. The chain crosses the membrane as a helical span at residues 128 to 150; sequence LAVFGRGASIMPLAFVLLVSAIK. The Cytoplasmic portion of the chain corresponds to 151–329; that stretch reads DAYEDFRRHR…SRLETRMNLE (179 aa). A helical membrane pass occupies residues 330 to 351; the sequence is IILLSLFLIVLCTIAAATAAVW. The Extracellular portion of the chain corresponds to 352–391; sequence LRTHRDDLDTILFYRRKDYSERPGGKNYKYYGWGWEIFFT. A helical membrane pass occupies residues 392–409; it reads FFMAVIVYQIMIPISLYI. At 410–914 the chain is on the cytoplasmic side; the sequence is SMELVRIGQA…HGHWNYQRMG (505 aa). Catalysis depends on D457, which acts as the 4-aspartylphosphate intermediate. Mg(2+) is bound by residues D859 and D863. Residues 915–934 traverse the membrane as a helical segment; the sequence is YMILYNFYRNAVFVLILFWY. At 935–948 the chain is on the extracellular side; that stretch reads VLFTCYTLTTAITE. The chain crosses the membrane as a helical span at residues 949-968; it reads WSSVLYSVIYTAIPTIIIGI. The Cytoplasmic segment spans residues 969–998; the sequence is LDKDLGRQTLLDHPQLYGVGQRAEGYSTTL. A helical membrane pass occupies residues 999-1020; it reads FWYTMIDTIWQSAAIFFIPMFA. Topologically, residues 1021–1027 are extracellular; it reads YWGSTID. A helical transmembrane segment spans residues 1028–1050; sequence TSSLGDLWTIAAVVVVNLHLAMD. Residues 1051–1056 lie on the Cytoplasmic side of the membrane; that stretch reads VIRWNW. A helical membrane pass occupies residues 1057–1077; that stretch reads ITHAAIWGSIVAACICVIVID. At 1078 to 1090 the chain is on the extracellular side; that stretch reads VIPTLPGYWAIFQ. A helical transmembrane segment spans residues 1091 to 1115; sequence VGKTWMFWFCLLAIVVTSLLPRFAI. Over 1116–1158 the chain is Cytoplasmic; the sequence is KFLVEYYRPSDVRIAREAEKLGTFRESQPVGVEMNLIQDPPRR.

Belongs to the cation transport ATPase (P-type) (TC 3.A.3) family. Type IV subfamily. Expressed in roots, flowers, anthers, leaves, vascular tissues and stems.

The protein localises to the endoplasmic reticulum membrane. It is found in the cell membrane. It catalyses the reaction ATP + H2O + phospholipidSide 1 = ADP + phosphate + phospholipidSide 2.. Involved in transport of phospholipids. Contributes to transmembrane flipping of lipids. Has activity with phosphatidylserine and with a much lower efficiency with phosphatidylethanolamine, but not with phosphatidylcholine. This is Phospholipid-transporting ATPase 1 from Arabidopsis thaliana (Mouse-ear cress).